The chain runs to 96 residues: RNA-binding protein Hfq (96 aa).

The Sm domain maps to 9-68 (DPFLNALRRERVPVSIYLVNGIKLQGQIESFDQFVILLKNTVSQMVYKHAISTVVPSRPV). The disordered stretch occupies residues 64–96 (PSRPVSHHSNTGTNQAGTNYSGGNATQQDDVAE). Positions 70-96 (HHSNTGTNQAGTNYSGGNATQQDDVAE) are enriched in polar residues.

It belongs to the Hfq family. Homohexamer.

RNA chaperone that binds small regulatory RNA (sRNAs) and mRNAs to facilitate mRNA translational regulation in response to envelope stress, environmental stress and changes in metabolite concentrations. Also binds with high specificity to tRNAs. The polypeptide is RNA-binding protein Hfq (Proteus mirabilis (strain HI4320)).